A 1187-amino-acid polypeptide reads, in one-letter code: Disease resistance protein TAO1 (1187 aa).

Positions W38–L202 constitute a TIR domain. E113 is an active-site residue. In terms of domain architecture, NB-ARC spans E217–L478. LRR repeat units lie at residues D498–I522, S611–P633, F635–N658, K660–A679, T680–A703, T704–L727, T728–N750, T752–I775, N799–L823, T824–L849, A870–I894, T895–A918, N920–I942, and C953–D974.

The catalysed reaction is NAD(+) + H2O = ADP-D-ribose + nicotinamide + H(+). In terms of biological role, TIR-NB-LRR receptor-like protein that contributes to disease resistance induced by the Pseudomonas syringae type III effector AvrB. Acts additively with RPM1 to generate a full disease resistance response to P.syringae expressing this type III effector. The protein is Disease resistance protein TAO1 of Arabidopsis thaliana (Mouse-ear cress).